The primary structure comprises 225 residues: ATP-dependent Clp protease proteolytic subunit (225 aa).

The active-site Nucleophile is Ser-123. His-148 is a catalytic residue.

This sequence belongs to the peptidase S14 family. In terms of assembly, fourteen ClpP subunits assemble into 2 heptameric rings which stack back to back to give a disk-like structure with a central cavity, resembling the structure of eukaryotic proteasomes.

It is found in the cytoplasm. The catalysed reaction is Hydrolysis of proteins to small peptides in the presence of ATP and magnesium. alpha-casein is the usual test substrate. In the absence of ATP, only oligopeptides shorter than five residues are hydrolyzed (such as succinyl-Leu-Tyr-|-NHMec, and Leu-Tyr-Leu-|-Tyr-Trp, in which cleavage of the -Tyr-|-Leu- and -Tyr-|-Trp bonds also occurs).. Its function is as follows. Cleaves peptides in various proteins in a process that requires ATP hydrolysis. Has a chymotrypsin-like activity. Plays a major role in the degradation of misfolded proteins. This chain is ATP-dependent Clp protease proteolytic subunit, found in Chlorobaculum tepidum (strain ATCC 49652 / DSM 12025 / NBRC 103806 / TLS) (Chlorobium tepidum).